Here is an 89-residue protein sequence, read N- to C-terminus: uncharacterized protein (89 aa).

This is an uncharacterized protein from Schizosaccharomyces pombe (strain 972 / ATCC 24843) (Fission yeast).